A 221-amino-acid polypeptide reads, in one-letter code: Keratin-associated protein 10-3 (221 aa).

18 repeat units span residues 26 to 30 (CCEPP), 31 to 35 (CCATS), 36 to 40 (CCAPA), 57 to 61 (CCQAA), 79 to 83 (CCQQS), 89 to 93 (CCTSS), 99 to 103 (CCVPV), 104 to 108 (CCKPV), 109 to 113 (CCVPV), 114 to 118 (CCKPV), 119 to 123 (CCKPI), 124 to 128 (CCVPV), 136 to 140 (CCQQS), 146 to 150 (CCTTS), 151 to 155 (CCRPS), 177 to 181 (CCAPA), 188 to 192 (CCRPA), and 210 to 214 (CCGLS). Residues 26-214 (CCEPPCCATS…RLSSACCGLS (189 aa)) are 18 X 5 AA repeats of C-C-X(3).

This sequence belongs to the KRTAP type 10 family. In terms of assembly, interacts with hair keratins. Restricted to a narrow region of the hair fiber cuticle, lying approximately 20 cell layers above the apex of the dermal papilla of the hair root; not detected in any other tissues.

In terms of biological role, in the hair cortex, hair keratin intermediate filaments are embedded in an interfilamentous matrix, consisting of hair keratin-associated proteins (KRTAP), which are essential for the formation of a rigid and resistant hair shaft through their extensive disulfide bond cross-linking with abundant cysteine residues of hair keratins. The matrix proteins include the high-sulfur and high-glycine-tyrosine keratins. The protein is Keratin-associated protein 10-3 (KRTAP10-3) of Homo sapiens (Human).